We begin with the raw amino-acid sequence, 90 residues long: Probable Fe(2+)-trafficking protein (90 aa).

The protein belongs to the Fe(2+)-trafficking protein family.

Could be a mediator in iron transactions between iron acquisition and iron-requiring processes, such as synthesis and/or repair of Fe-S clusters in biosynthetic enzymes. In Haemophilus influenzae (strain 86-028NP), this protein is Probable Fe(2+)-trafficking protein.